The sequence spans 162 residues: Anthrone oxygenase nsrD (162 aa).

The next 3 membrane-spanning stretches (helical) occupy residues 17-37, 54-74, and 86-106; these read FLSG…LDTI, GSIY…YVAL, and PYVL…WVMV. N109 is a glycosylation site (N-linked (GlcNAc...) asparagine). The chain crosses the membrane as a helical span at residues 130 to 150; sequence LVVKWAWLHVVRSLYPLFGAF.

It belongs to the anthrone oxygenase family.

The protein localises to the membrane. It catalyses the reaction emodin anthrone + O2 = emodin + H2O + H(+). It participates in secondary metabolite biosynthesis. Functionally, anthrone oxygenase; part of the gene cluster that mediates the biosynthesis of the tetrahydroxanthone dimer neosartorin, which exhibits antibacterial activity. The two different monomeric units appear to be synthesized by the same set of enzymes, among which the Baeyer-Villiger monooxygenase nsrF is the key enzyme for the divergence of the biosynthetic routes. The pathway begins with the synthesis of atrochrysone thioester by the polyketide synthase nsrB. The atrochrysone carboxyl ACP thioesterase nsrC then breaks the thioester bond and releases the atrochrysone carboxylic acid from AacuL. Atrochrysone carboxylic acid is decarboxylated by the decarboxylase nsrE, and oxidized by the anthrone oxygenase nsrD to yield emodin. Emodin is then reduced to emodin hydroquinone by the oxidoreductase nsrR. A-ring reduction by the short chain dehydrogenase nsrJ, dehydration by the scytalone dehydratase-like protein nsrI and probable spontaneous re-oxidation, results in overall deoxygenation to chrysophanol. The Baeyer-Villiger monooxygenase nsrF accepts chrysophanol as a substrate to insert one oxygen atom at two different positions to yield the precursors of both monomric units. NsrF is promiscuous/flexible in interacting with the 2 (non methylated and methylated) aromatic rings of chrysophanol, thus diverging the biosynthetic pathway at this point. After the hydrolysis of the lactones, methylesterification by the methyltransferase nsrG yields respectively moniliphenone and 2,2',6'-trihydroxy-4-methyl-6-methoxya-cyldiphenylmethanone. The next steps are the hydroxylation by the FAD-dependent monooxygenase nsrK, followed by isomerization by the monooxygenase nsrQ. The short chain dehydrogenase/reductase nsrO then catalyzes the C-5 ketoreduction to give the xanthone skeleton of blennolide C and 5-acetylblennolide A. The acetyltransferase nsrL has a strict substrate specificity and uses only blennolide A but not blennolide C to yield 5-acetylblennolide A as the single-acetylated product. In the final step of the biosynthesis, the heterodimerization of the 2 xanthones, blennolide C and 5-acetylblennolide A, is catalyzed by the cytochrome P450 monooxygenase nsrP. NsrP can utilize at least three different xanthones as its substrates to perform the dimerization reaction. This chain is Anthrone oxygenase nsrD, found in Aspergillus novofumigatus (strain IBT 16806).